The sequence spans 77 residues: Putative defensin-like protein 162 (77 aa).

Positions 1–27 (MAKQLCSYMFISMFILSAFLALPSAEG) are cleaved as a signal peptide. 4 disulfides stabilise this stretch: Cys-34–Cys-77, Cys-44–Cys-63, Cys-49–Cys-71, and Cys-53–Cys-73.

It belongs to the DEFL family.

It is found in the secreted. This chain is Putative defensin-like protein 162 (LCR37), found in Arabidopsis thaliana (Mouse-ear cress).